A 403-amino-acid chain; its full sequence is MYKFKTNLFLVIYFIAIFSIESSISSFNTEINSNSNSDFGHMEIPKNIEDIPFICYNNLSDSSYYLKNNQYFYEPISTIIDNSVSYFPNNCSNISDKNSLSCCLKIDSDQFKSTMDYITSDSLNTSVIGRLYDCRTNSSLGGGFKIVEDNGNTPDLETMSNELDVIDSRESVKICLSQLQQLQCFKCSQDHKTILRDFHTDLLYRIESDPNHQPLFYIKSSTFKHPIIDTSNDGFPTTGAGGADNTIHYIEKDISKGKSIAICNDYFEKLMSHCQFVNVRGKPLNQLFQPLNGKPAVFDSENYINEIFGITIPNLNEFVYVSSDNLDLFYVSNFNCFKQPIPNFQQPTCSLIINKKWYEKSQNSNDYNNNNDSDNSSFGISIQKYLNSFLNSFIIILIINIII.

Positions methionine 1–serine 26 are cleaved as a signal peptide. Over phenylalanine 27–serine 381 the chain is Extracellular. Asparagine 58, asparagine 90, asparagine 93, asparagine 124, asparagine 137, asparagine 371, and asparagine 375 each carry an N-linked (GlcNAc...) asparagine glycan. Residues isoleucine 382 to isoleucine 402 traverse the membrane as a helical segment. Residue isoleucine 403 is a topological domain, cytoplasmic.

The protein resides in the membrane. This is an uncharacterized protein from Dictyostelium discoideum (Social amoeba).